The sequence spans 94 residues: Pyrimidine/purine nucleoside phosphorylase (94 aa).

It belongs to the nucleoside phosphorylase PpnP family.

It carries out the reaction a purine D-ribonucleoside + phosphate = a purine nucleobase + alpha-D-ribose 1-phosphate. The enzyme catalyses adenosine + phosphate = alpha-D-ribose 1-phosphate + adenine. The catalysed reaction is cytidine + phosphate = cytosine + alpha-D-ribose 1-phosphate. It catalyses the reaction guanosine + phosphate = alpha-D-ribose 1-phosphate + guanine. It carries out the reaction inosine + phosphate = alpha-D-ribose 1-phosphate + hypoxanthine. The enzyme catalyses thymidine + phosphate = 2-deoxy-alpha-D-ribose 1-phosphate + thymine. The catalysed reaction is uridine + phosphate = alpha-D-ribose 1-phosphate + uracil. It catalyses the reaction xanthosine + phosphate = alpha-D-ribose 1-phosphate + xanthine. In terms of biological role, catalyzes the phosphorolysis of diverse nucleosides, yielding D-ribose 1-phosphate and the respective free bases. Can use uridine, adenosine, guanosine, cytidine, thymidine, inosine and xanthosine as substrates. Also catalyzes the reverse reactions. In Pseudomonas entomophila (strain L48), this protein is Pyrimidine/purine nucleoside phosphorylase.